The sequence spans 568 residues: DNA ligase (568 aa).

Glu249 is an ATP binding site. The active-site N6-AMP-lysine intermediate is the Lys251. ATP-binding residues include Arg256, Arg271, Glu301, Phe342, Arg418, and Lys424.

Belongs to the ATP-dependent DNA ligase family. The cofactor is Mg(2+).

The catalysed reaction is ATP + (deoxyribonucleotide)n-3'-hydroxyl + 5'-phospho-(deoxyribonucleotide)m = (deoxyribonucleotide)n+m + AMP + diphosphate.. In terms of biological role, DNA ligase that seals nicks in double-stranded DNA during DNA replication, DNA recombination and DNA repair. The polypeptide is DNA ligase (Methanocella arvoryzae (strain DSM 22066 / NBRC 105507 / MRE50)).